The chain runs to 324 residues: Acetyl-coenzyme A carboxylase carboxyl transferase subunit alpha (324 aa).

The region spanning 37–291 (KLERRLDKLK…RDFILREWLR (255 aa)) is the CoA carboxyltransferase C-terminal domain.

It belongs to the AccA family. In terms of assembly, acetyl-CoA carboxylase is a heterohexamer composed of biotin carboxyl carrier protein (AccB), biotin carboxylase (AccC) and two subunits each of ACCase subunit alpha (AccA) and ACCase subunit beta (AccD).

It localises to the cytoplasm. It catalyses the reaction N(6)-carboxybiotinyl-L-lysyl-[protein] + acetyl-CoA = N(6)-biotinyl-L-lysyl-[protein] + malonyl-CoA. It functions in the pathway lipid metabolism; malonyl-CoA biosynthesis; malonyl-CoA from acetyl-CoA: step 1/1. Functionally, component of the acetyl coenzyme A carboxylase (ACC) complex. First, biotin carboxylase catalyzes the carboxylation of biotin on its carrier protein (BCCP) and then the CO(2) group is transferred by the carboxyltransferase to acetyl-CoA to form malonyl-CoA. In Chlamydia abortus (strain DSM 27085 / S26/3) (Chlamydophila abortus), this protein is Acetyl-coenzyme A carboxylase carboxyl transferase subunit alpha.